The chain runs to 264 residues: Adenosylcobinamide-GDP ribazoletransferase (264 aa).

7 consecutive transmembrane segments (helical) span residues 10–30 (LFFI…VGYT), 43–63 (LVGA…AQVW), 113–133 (LGSY…VALY), 141–161 (VQAL…PVAL), 183–203 (VSDA…AAAW), 205–225 (LGAS…LAAF), and 243–263 (GAAQ…GVWF).

The protein belongs to the CobS family. Mg(2+) is required as a cofactor.

The protein localises to the cell inner membrane. The enzyme catalyses alpha-ribazole + adenosylcob(III)inamide-GDP = adenosylcob(III)alamin + GMP + H(+). The catalysed reaction is alpha-ribazole 5'-phosphate + adenosylcob(III)inamide-GDP = adenosylcob(III)alamin 5'-phosphate + GMP + H(+). It functions in the pathway cofactor biosynthesis; adenosylcobalamin biosynthesis; adenosylcobalamin from cob(II)yrinate a,c-diamide: step 7/7. In terms of biological role, joins adenosylcobinamide-GDP and alpha-ribazole to generate adenosylcobalamin (Ado-cobalamin). Also synthesizes adenosylcobalamin 5'-phosphate from adenosylcobinamide-GDP and alpha-ribazole 5'-phosphate. This chain is Adenosylcobinamide-GDP ribazoletransferase, found in Leptothrix cholodnii (strain ATCC 51168 / LMG 8142 / SP-6) (Leptothrix discophora (strain SP-6)).